A 585-amino-acid polypeptide reads, in one-letter code: MASRWLALLWAPVFLCVALILETASGTGDPSTKAHGHIQFSAGSVNQTAMADCRAVCGLNTSDRCDFVRRNPDCRSEAGYLDYLEGIFCYFPPNLLPLAITLYVFWLLYLFLILGVTAAKFFCPNLSAISTNLKLSHNVAGVTFLAFGNGAPDIFSALVAFSDPRTAGLAIGALFGAGVLVTTVVAGGITILHPFMAASRPFLRDIAFYMVAVFLTFTALYLGRITLTWALGYLGLYVFYVVTVIICTWVYQRQRSRSLVHSISETPELLSESEEDQMSSNTNSYDYGDEYRPLLLGRETTVQILIQALNPLDYRKWRTQSISWRVLKVVKLPVEFLLLLTVPVVDPDKDDRNWKRPLNCLQLVISPLVLVLTLQSGVYGIYEIGGLLPVWAVVVIVGTALASVTFFATSNREPPRLHWLFAFLGFLTSALWINAAATEVVNILRSLGVIFRLSNTVLGLTLLAWGNSIGDAFSDFTLARQGYPRMAFSACFGGIIFNILVGVGLGCLLQIIRNHVVEVKLEPDGLLVWVLASALGLSLIFSLVSVPLQCFQLSKAYGLCLLLFYICFLVVVLLTEFGVIHLKKA.

A signal peptide spans 1 to 26 (MASRWLALLWAPVFLCVALILETASG). Over 27–95 (TGDPSTKAHG…GIFCYFPPNL (69 aa)) the chain is Extracellular. N-linked (GlcNAc...) asparagine glycosylation occurs at Asn-46. Residues 96-116 (LPLAITLYVFWLLYLFLILGV) traverse the membrane as a helical segment. Residues 117–140 (TAAKFFCPNLSAISTNLKLSHNVA) lie on the Cytoplasmic side of the membrane. A helical transmembrane segment spans residues 141–161 (GVTFLAFGNGAPDIFSALVAF). Over 162–168 (SDPRTAG) the chain is Extracellular. The helical transmembrane segment at 169–189 (LAIGALFGAGVLVTTVVAGGI) threads the bilayer. Residues 190–205 (TILHPFMAASRPFLRD) are Cytoplasmic-facing. The chain crosses the membrane as a helical span at residues 206–226 (IAFYMVAVFLTFTALYLGRIT). At 227–229 (LTW) the chain is on the extracellular side. Residues 230 to 250 (ALGYLGLYVFYVVTVIICTWV) form a helical membrane-spanning segment. The Cytoplasmic segment spans residues 251–325 (YQRQRSRSLV…KWRTQSISWR (75 aa)). Residue Ser-258 is modified to Phosphoserine; by PKA. Residues 326–346 (VLKVVKLPVEFLLLLTVPVVD) traverse the membrane as a helical segment. Residues 347-360 (PDKDDRNWKRPLNC) are Extracellular-facing. The helical transmembrane segment at 361 to 381 (LQLVISPLVLVLTLQSGVYGI) threads the bilayer. Residues 382 to 383 (YE) are Cytoplasmic-facing. Residues 384 to 404 (IGGLLPVWAVVVIVGTALASV) traverse the membrane as a helical segment. Topologically, residues 405 to 416 (TFFATSNREPPR) are extracellular. The chain crosses the membrane as a helical span at residues 417 to 437 (LHWLFAFLGFLTSALWINAAA). Over 438 to 445 (TEVVNILR) the chain is Cytoplasmic. Residues 446-466 (SLGVIFRLSNTVLGLTLLAWG) traverse the membrane as a helical segment. Residues 467-491 (NSIGDAFSDFTLARQGYPRMAFSAC) lie on the Extracellular side of the membrane. A helical transmembrane segment spans residues 492–512 (FGGIIFNILVGVGLGCLLQII). The Cytoplasmic segment spans residues 513 to 525 (RNHVVEVKLEPDG). A helical transmembrane segment spans residues 526–546 (LLVWVLASALGLSLIFSLVSV). Residues 547–559 (PLQCFQLSKAYGL) lie on the Extracellular side of the membrane. Residues 560–580 (CLLLFYICFLVVVLLTEFGVI) traverse the membrane as a helical segment. Residues 581–585 (HLKKA) lie on the Cytoplasmic side of the membrane.

Belongs to the Ca(2+):cation antiporter (CaCA) (TC 2.A.19) family. SLC24A subfamily. In terms of processing, phosphorylation at Ser-258 by PKA prevents calcium overload. In terms of tissue distribution, ubiquitously expressed. Expressed in dental tissues.

The protein localises to the mitochondrion inner membrane. Its subcellular location is the cell membrane. It catalyses the reaction Ca(2+)(in) + 3 Na(+)(out) = Ca(2+)(out) + 3 Na(+)(in). The enzyme catalyses 3 Li(+)(out) + Ca(2+)(in) = 3 Li(+)(in) + Ca(2+)(out). Inhibited by the sodium/calcium exchanger inhibitor CGP-37157. Strongly inhibited by zinc. Its function is as follows. Mitochondrial sodium/calcium antiporter that mediates sodium-dependent calcium efflux from mitochondrion, by mediating the exchange of 3 sodium ions per 1 calcium ion. Plays a central role in mitochondrial calcium homeostasis by mediating mitochondrial calcium extrusion: calcium efflux is essential for mitochondrial function and cell survival, notably in cardiomyocytes. Regulates rates of glucose-dependent insulin secretion in pancreatic beta-cells during the first phase of insulin secretion: acts by mediating efflux of calcium from mitochondrion, thereby affecting cytoplasmic calcium responses. Required for store-operated Ca(2+) entry (SOCE) and Ca(2+) release-activated Ca(2+) (CRAC) channel regulation: sodium transport by SLC8B1 leads to promote calcium-shuttling that modulates mitochondrial redox status, thereby regulating SOCE activity. Involved in B-lymphocyte chemotaxis. Able to transport Ca(2+) in exchange of either Li(+) or Na(+), explaining how Li(+) catalyzes Ca(2+) exchange. In contrast to other members of the family its function is independent of K(+). The sequence is that of Mitochondrial sodium/calcium exchanger protein from Mus musculus (Mouse).